We begin with the raw amino-acid sequence, 273 residues long: Hemin import ATP-binding protein HmuV (273 aa).

Positions 2–256 (LTAHHLDVAR…AHIAQCYGFA (255 aa)) constitute an ABC transporter domain. 34 to 41 (GRNGAGKS) contributes to the ATP binding site.

It belongs to the ABC transporter superfamily. Heme (hemin) importer (TC 3.A.1.14.5) family. In terms of assembly, the complex is composed of two ATP-binding proteins (HmuV), two transmembrane proteins (HmuU) and a solute-binding protein (HmuT).

The protein resides in the cell inner membrane. Functionally, part of the ABC transporter complex HmuTUV involved in hemin import. Responsible for energy coupling to the transport system. The sequence is that of Hemin import ATP-binding protein HmuV from Burkholderia lata (strain ATCC 17760 / DSM 23089 / LMG 22485 / NCIMB 9086 / R18194 / 383).